We begin with the raw amino-acid sequence, 1829 residues long: Sodium channel protein type 4 subunit alpha A (1829 aa).

Residues 1 to 124 (MARLLPPTGT…RGAIKILIHS (124 aa)) lie on the Cytoplasmic side of the membrane. The segment at 32–52 (STREELEGAEEEPQAPSSDLE) is disordered. One copy of the I repeat lies at 106-421 (CISPFSIVRR…VVAMAYDEQN (316 aa)). Residues 125 to 143 (LFSMFIMITILSNCVFMTM) traverse the membrane as a helical segment. The Extracellular portion of the chain corresponds to 144–150 (SNPPAWS). The chain crosses the membrane as a helical span at residues 151–171 (KTVEYVFTGIYTFEATVKVLS). Residues 172–185 (RGFCIGPFTFLRDP) are Cytoplasmic-facing. The helical transmembrane segment at 186-203 (WNWLDFMVISMAYVTEFV) threads the bilayer. Residues 204 to 209 (DLGNVS) are Extracellular-facing. N207 carries N-linked (GlcNAc...) asparagine glycosylation. A helical transmembrane segment spans residues 210–226 (ALRTFRVLRALKTITVI). Residues 227–245 (PGLKTIVGALIQSVKKMID) lie on the Cytoplasmic side of the membrane. Residues 246–265 (VMILTIFALAVFALIGLQLF) traverse the membrane as a helical segment. Over 266–358 (MGNLRQKCIR…PNYGYTSYDN (93 aa)) the chain is Extracellular. An intrachain disulfide couples C273 to C327. N-linked (GlcNAc...) asparagine glycosylation is found at N280, N293, and N329. An intrachain disulfide couples C336 to C342. The segment at residues 359 to 383 (FGWAFLALFRLMTQDFWENLFQLTL) is an intramembrane region (pore-forming). At 384–390 (RAAGKTY) the chain is on the extracellular side. Residues 391–411 (MIFFVVVIFLGSFYLINLILA) traverse the membrane as a helical segment. Residues 412–582 (VVAMAYDEQN…KWVHFVVMDP (171 aa)) lie on the Cytoplasmic side of the membrane. The segment covering 446-467 (ETGSKASLASQKTQSRGSNRTG) has biased composition (polar residues). Residues 446–468 (ETGSKASLASQKTQSRGSNRTGS) are disordered. The II repeat unit spans residues 564–836 (CCAPWILFKK…QIAIGRITRG (273 aa)). A helical membrane pass occupies residues 583-601 (FVDLGITICIVLNTLFMAM). Topologically, residues 602–612 (EHYPMSPHFEH) are extracellular. A helical membrane pass occupies residues 613–632 (VLSVGNLVFTGIFTAEMVFK). At 633–646 (LIAMDPYYYFQVGW) the chain is on the cytoplasmic side. A helical transmembrane segment spans residues 647–666 (NIFDSIIVTLSLVELGLANV). Residues 667–668 (QG) are Extracellular-facing. Residues 669–686 (LSVLRSFRLLRVFKLAKS) traverse the membrane as a helical segment. At 687-702 (WPTLNMLIKIIGNSVG) the chain is on the cytoplasmic side. The chain crosses the membrane as a helical span at residues 703–721 (ALGNLTLVLAIIVFIFAVV). Residues 722–750 (GMQLFGKSYKDCVCKISEDCELPRWHMND) are Extracellular-facing. C735 and C741 are oxidised to a cystine. Positions 751 to 771 (FFHSFLIVFRILCGEWIETMW) form an intramembrane region, pore-forming. Residues 772–782 (DCMEVAGASMC) lie on the Extracellular side of the membrane. A disulfide bond links C773 and C782. A helical membrane pass occupies residues 783-801 (LIVFMMVMVIGNLVVLNLF). At 802–998 (LALLLSSFSG…TCFTIVEHDY (197 aa)) the chain is on the cytoplasmic side. The tract at residues 901–957 (SDVEEDEDSESSDEEDAKATLNDGDSSVCSTVDYQPPEPEPEPEEVEEEEPEPEEPE) is disordered. The span at 902–916 (DVEEDEDSESSDEED) shows a compositional bias: acidic residues. Positions 923-933 (DGDSSVCSTVD) are enriched in polar residues. Positions 939 to 957 (PEPEPEEVEEEEPEPEEPE) are enriched in acidic residues. An III repeat occupies 979-1292 (WGKKWWNLRR…KKYYNAMKKL (314 aa)). Residues 999-1016 (FETFIIFMILLSSGALAF) form a helical membrane-spanning segment. Residues 1017-1029 (EDINIERRRVIKT) are Extracellular-facing. A helical membrane pass occupies residues 1030–1048 (ILEYADKVFTYIFIVEMLL). Residues 1049–1062 (KWVAYGFKTYFTNA) are Cytoplasmic-facing. Residues 1063–1081 (WCWLDFLIVDVSLVSLTAN) form a helical membrane-spanning segment. The Extracellular segment spans residues 1082–1089 (LMGYSELG). The chain crosses the membrane as a helical span at residues 1090–1108 (AIKSLRTLRALRPLRALSR). The Cytoplasmic portion of the chain corresponds to 1109–1125 (FEGMRVVVNALVGAIPS). Residues 1126–1145 (IFNVLLVCLIFWLIFSIMGV) form a helical membrane-spanning segment. The Extracellular segment spans residues 1146 to 1196 (NLFAGKFYHCINTTTEERIPMDVVNNKSDCMALMYTNEVRWVNVKVNYDNV). A disulfide bond links C1155 and C1175. N-linked (GlcNAc...) asparagine glycans are attached at residues N1157 and N1171. An intramembrane region (pore-forming) is located at residues 1197–1218 (GLGYLSLLQIATFKGWMDIMYA). The Extracellular portion of the chain corresponds to 1219–1235 (AVDSREVDEQPSYEINL). A helical membrane pass occupies residues 1236 to 1257 (YMYLYFVIFIIFGSFFTLNLFI). At 1258–1320 (GVIIDNFNQQ…LVFDFISKQF (63 aa)) the chain is on the cytoplasmic side. The tract at residues 1276 to 1278 (IFM) is important for rapid channel inactivation. An IV repeat occupies 1301-1599 (IPRPSNIIQG…WEKFDVDATQ (299 aa)). A helical membrane pass occupies residues 1321–1338 (FDIFIMVLICLNMVTMMI). At 1339-1349 (ETDDQSAEKEY) the chain is on the extracellular side. A helical membrane pass occupies residues 1350–1368 (VLYQINLVFIVVFTSECVL). Over 1369–1380 (KLFALRQYFFTI) the chain is Cytoplasmic. The helical transmembrane segment at 1381 to 1398 (GWNVFDFVVVILSIAGLM) threads the bilayer. The Extracellular portion of the chain corresponds to 1399–1411 (LSDIIEKYFVSPT). The chain crosses the membrane as a helical span at residues 1412–1428 (LFRVIRLARIGRVLRLI). The Cytoplasmic segment spans residues 1429–1447 (RGAKGIRTLLFALMMSLPA). Residues 1448–1465 (LFNIGLLLFLIMFIFSIF) form a helical membrane-spanning segment. Over 1466 to 1487 (GMSNFAYVKKQAGIDDIFNFET) the chain is Extracellular. The pore-forming intramembrane region spans 1488-1510 (FGGSIICLFEITTSAGWDGLLLP). Topologically, residues 1511-1540 (ILNSGPPDCDPDFENPGTDVRGNCGNPGMG) are extracellular. The cysteines at positions 1519 and 1534 are disulfide-linked. A helical membrane pass occupies residues 1541–1563 (IMFFCSYIIMSFLVVVNMYIAII). At 1564 to 1829 (LENFNNAQEE…NATTIKESIV (266 aa)) the chain is on the cytoplasmic side. Residues 1693–1722 (EERAAIAVQRIYRRHLLKRAIRYACFMRRS) form the IQ domain. The disordered stretch occupies residues 1765-1786 (PMRPNSQPPKPSQVTQTRASVT).

It belongs to the sodium channel (TC 1.A.1.10) family. Nav1.4/SCN4A subfamily. As to quaternary structure, voltage-gated sodium (Nav) channels consist of an ion-conducting alpha subunit which is functional on its own associated with regulatory beta subunits. Expressed in skeletal muscle, brain, spinal cord, and eye.

It localises to the cell membrane. It carries out the reaction Na(+)(in) = Na(+)(out). Functionally, pore-forming subunit of a voltage-gated sodium (Nav) channel that directly mediates the depolarizing phase of action potentials in excitable membranes. Navs, also called VGSCs (voltage-gated sodium channels) or VDSCs (voltage-dependent sodium channels), operate by switching between closed and open conformations depending on the voltage difference across the membrane. In the open conformation they allow Na(+) ions to selectively pass through the pore, along their electrochemical gradient. The influx of Na+ ions provokes membrane depolarization, initiating the propagation of electrical signals throughout cells and tissues. The sequence is that of Sodium channel protein type 4 subunit alpha A (scn4aa) from Danio rerio (Zebrafish).